Consider the following 153-residue polypeptide: MRKYIPLVLFIFSWPVLCADIHGRVVRVLDGDTIEVMDSRKAVRIRLVNIDAPEKKQDYGRWSTDMMKSLVAGKTVTVTYFQRDRYGRMLGQVYAPDGMNVNQFMVRAGAAWVYEQYNTDPVLPVLQNEARQQKRGLWSDADPVPPWIWRHRK.

Residues 1–19 (MRKYIPLVLFIFSWPVLCA) form the signal peptide. Active-site residues include R46, E54, and R88.

It belongs to the thermonuclease family.

This is an uncharacterized protein from Escherichia coli O157:H7.